A 217-amino-acid polypeptide reads, in one-letter code: Killer cell lectin-like receptor subfamily B member 1F (217 aa).

Over 1–45 (MDTSKVHGNVKPFRCPGYKQASSPSFSPDACRCPHWHHLALKSGC) the chain is Cytoplasmic. The LCK-binding motif motif lies at 31 to 34 (CRCP). The chain crosses the membrane as a helical; Signal-anchor for type II membrane protein span at residues 46–66 (AGLILLLLSLIGLSVLVRFLV). Residues 67–217 (QKPPIEKCSV…WICQKTLIHV (151 aa)) are Extracellular-facing. N-linked (GlcNAc...) asparagine glycosylation is present at Asn81. Positions 101–211 (HWNKCLFVSQ…CSSDNHWICQ (111 aa)) constitute a C-type lectin domain. 2 cysteine pairs are disulfide-bonded: Cys122–Cys210 and Cys189–Cys202.

In terms of tissue distribution, highly expressed in dendritic cells. Detectable in natural killer cells.

It localises to the membrane. Its function is as follows. Binds CLEC2I/Clr-g leading to activation of natural killer cells or costimulation of IL-2 production and proliferation of T-cells in response to antigen stimulation. May contribute to the formation of the immunological synapse between T-cells and antigen-presenting dendritic cells. The protein is Killer cell lectin-like receptor subfamily B member 1F (Klrb1f) of Mus musculus (Mouse).